Here is a 220-residue protein sequence, read N- to C-terminus: Small ribosomal subunit protein uS3c (220 aa).

A KH type-2 domain is found at 39-120 (IRDFIKNYVK…KLIIDIIRIT (82 aa)).

The protein belongs to the universal ribosomal protein uS3 family. As to quaternary structure, part of the 30S ribosomal subunit.

Its subcellular location is the plastid. This is Small ribosomal subunit protein uS3c (rps3) from Epifagus virginiana (Beechdrops).